The sequence spans 635 residues: Chaperone protein DnaK (635 aa).

Phosphothreonine; by autocatalysis is present on threonine 198. Positions 598 to 635 (YAKAQPGEEQAGGAPHEGEAKDEKVVDADFEEVKEDKK) are disordered. Positions 613–624 (HEGEAKDEKVVD) are enriched in basic and acidic residues. The span at 625–635 (ADFEEVKEDKK) shows a compositional bias: acidic residues.

It belongs to the heat shock protein 70 family.

Acts as a chaperone. This chain is Chaperone protein DnaK, found in Geotalea uraniireducens (strain Rf4) (Geobacter uraniireducens).